The chain runs to 472 residues: Probable glycine dehydrogenase (decarboxylating) subunit 2 (472 aa).

Position 268 is an N6-(pyridoxal phosphate)lysine (K268).

It belongs to the GcvP family. C-terminal subunit subfamily. In terms of assembly, the glycine cleavage system is composed of four proteins: P, T, L and H. In this organism, the P 'protein' is a heterodimer of two subunits. The cofactor is pyridoxal 5'-phosphate.

It carries out the reaction N(6)-[(R)-lipoyl]-L-lysyl-[glycine-cleavage complex H protein] + glycine + H(+) = N(6)-[(R)-S(8)-aminomethyldihydrolipoyl]-L-lysyl-[glycine-cleavage complex H protein] + CO2. The glycine cleavage system catalyzes the degradation of glycine. The P protein binds the alpha-amino group of glycine through its pyridoxal phosphate cofactor; CO(2) is released and the remaining methylamine moiety is then transferred to the lipoamide cofactor of the H protein. In Thermoplasma volcanium (strain ATCC 51530 / DSM 4299 / JCM 9571 / NBRC 15438 / GSS1), this protein is Probable glycine dehydrogenase (decarboxylating) subunit 2.